A 65-amino-acid polypeptide reads, in one-letter code: Neurotoxin BmK AGAP-SYPU2 (65 aa).

An LCN-type CS-alpha/beta domain is found at K2–N64. 4 disulfide bridges follow: C12–C63, C16–C36, C22–C46, and C26–C48.

Expressed by the venom gland.

The protein resides in the secreted. Its function is as follows. Alpha toxins bind voltage-independently at site-3 of sodium channels and inhibit the inactivation of the activated channels, thereby blocking neuronal transmission. In vivo, shows analgesic activity (ED(50) is 1.42 mg/kg) and antitumor activity against Ehrlich ascites tumor and S-180 fibrosarcoma models. This chain is Neurotoxin BmK AGAP-SYPU2, found in Olivierus martensii (Manchurian scorpion).